The sequence spans 37 residues: Large ribosomal subunit protein bL36 (37 aa).

The protein belongs to the bacterial ribosomal protein bL36 family.

The chain is Large ribosomal subunit protein bL36 from Vesicomyosocius okutanii subsp. Calyptogena okutanii (strain HA).